The following is a 51-amino-acid chain: ATP synthase protein 8 (51 aa).

A helical membrane pass occupies residues 7–27 (LNWAMMTIMFSLSLLVSMIIL).

Belongs to the ATPase protein 8 family. F-type ATPases have 2 components, CF(1) - the catalytic core - and CF(0) - the membrane proton channel.

The protein resides in the mitochondrion membrane. Mitochondrial membrane ATP synthase (F(1)F(0) ATP synthase or Complex V) produces ATP from ADP in the presence of a proton gradient across the membrane which is generated by electron transport complexes of the respiratory chain. F-type ATPases consist of two structural domains, F(1) - containing the extramembraneous catalytic core and F(0) - containing the membrane proton channel, linked together by a central stalk and a peripheral stalk. During catalysis, ATP synthesis in the catalytic domain of F(1) is coupled via a rotary mechanism of the central stalk subunits to proton translocation. Part of the complex F(0) domain. Minor subunit located with subunit a in the membrane. In Limulus polyphemus (Atlantic horseshoe crab), this protein is ATP synthase protein 8 (MT-ATP8).